A 339-amino-acid polypeptide reads, in one-letter code: Uracil nucleotide/cysteinyl leukotriene receptor (339 aa).

Residues 1 to 36 (MDGLETALPSLTDNASLAYSEQCGQETPLENMLFAC) lie on the Extracellular side of the membrane. The N-linked (GlcNAc...) asparagine glycan is linked to asparagine 14. Residues 37–57 (FYLLDFILAFVGNALALWLFI) traverse the membrane as a helical segment. Residues 58 to 64 (WDHKSGT) are Cytoplasmic-facing. Residues 65–85 (PANVFLMHLAVADLSCVLVLP) form a helical membrane-spanning segment. Residues 86–105 (TRLVYHFSGNHWPFGEIPCR) lie on the Extracellular side of the membrane. Cysteine 104 and cysteine 181 are disulfide-bonded. A helical transmembrane segment spans residues 106 to 126 (LTGFLFYLNMYASIYFLTCIS). The Cytoplasmic segment spans residues 127-147 (ADRFLAIVHPVKSLKLRRPLY). Residues 148 to 168 (AHLACAFLWIVVAVAMAPLLV) form a helical membrane-spanning segment. The Extracellular segment spans residues 169 to 195 (SPQTVQTNHTVVCLQLYREKASHHALA). A glycan (N-linked (GlcNAc...) asparagine) is linked at asparagine 176. A helical transmembrane segment spans residues 196-216 (SLAVAFTFPFITTVTCYLLII). At 217 to 232 (RSLRQGPRIEKHLKNK) the chain is on the cytoplasmic side. Residues 233–253 (AVRMIAMVLAIFLICFVPYHI) traverse the membrane as a helical segment. Topologically, residues 254-280 (HRSVYVLHYRGGGTSCSAQRALALGNR) are extracellular. Residues 281-301 (ITSCLTSLNGALDPVMYFFVA) form a helical membrane-spanning segment. Topologically, residues 302-339 (EKFRHALCNLLCSKRLTGPPPSFEGKTNESSLSARSEL) are cytoplasmic.

The protein belongs to the G-protein coupled receptor 1 family. Expressed in brain, kidney, and heart. Highest level in brain.

It is found in the cell membrane. Its function is as follows. Dual specificity receptor for uracil nucleotides and cysteinyl leukotrienes (CysLTs). Signals through G(i) and inhibition of adenylyl cyclase. May mediate brain damage by nucleotides and CysLTs following ischemia. The protein is Uracil nucleotide/cysteinyl leukotriene receptor of Rattus norvegicus (Rat).